The sequence spans 118 residues: Protein YoeF (118 aa).

The polypeptide is Protein YoeF (yoeF) (Escherichia coli (strain K12)).